We begin with the raw amino-acid sequence, 462 residues long: Fasciclin-like arabinogalactan protein 18 (462 aa).

The signal sequence occupies residues 1-25 (MDRCIYGCSVITIFFSFFFLLNASA). Residues Asn32, Asn77, and Asn293 are each glycosylated (N-linked (GlcNAc...) asparagine). 2 FAS1 domains span residues 40-185 (NSNS…ERLL) and 271-414 (VKDF…DGVL).

It belongs to the fasciclin-like AGP family.

It is found in the secreted. Functionally, may be a cell surface adhesion protein. This Arabidopsis thaliana (Mouse-ear cress) protein is Fasciclin-like arabinogalactan protein 18 (FLA18).